We begin with the raw amino-acid sequence, 360 residues long: 3-dehydroquinate synthase (360 aa).

NAD(+) contacts are provided by residues 70–75 (DGEKYK), 104–108 (GVIGD), 128–129 (TT), lysine 141, and lysine 150. Glutamate 183, histidine 246, and histidine 263 together coordinate Zn(2+).

The protein belongs to the sugar phosphate cyclases superfamily. Dehydroquinate synthase family. The cofactor is Co(2+). Requires Zn(2+) as cofactor. NAD(+) serves as cofactor.

It is found in the cytoplasm. The enzyme catalyses 7-phospho-2-dehydro-3-deoxy-D-arabino-heptonate = 3-dehydroquinate + phosphate. It participates in metabolic intermediate biosynthesis; chorismate biosynthesis; chorismate from D-erythrose 4-phosphate and phosphoenolpyruvate: step 2/7. Catalyzes the conversion of 3-deoxy-D-arabino-heptulosonate 7-phosphate (DAHP) to dehydroquinate (DHQ). In Acinetobacter baumannii (strain SDF), this protein is 3-dehydroquinate synthase.